The following is a 414-amino-acid chain: MLFRGTSLAYSLLVISFLTPRSSAGQNCLTKSLEDVVIDIQSSLSKGIRGNEPIHLATQEDCIGACCSTKDIAGDKACNLMIFDTRKTDRQPNCYLFFCPSEDACPLKPAKGLVTYRLIRDFPLTSANSSLQQLTQGEFLLLDHSSPGATPGFRTPAGYPKPTGLSWSDRSSLKSTAPLHLRKHIKADETSMQLPEEKSHSQSLQLPSELKMAHLLPKTVPTPPTTVAVAPLRNVSATLKPELLLTSISVTAKTLKQKEATTASPVTTVTSKLPGVPGSTSFTPVVTHQAALTNTFQAHTDSKGILETMPFQGGSTLTSDPRHGKSSTSESSITNKTASWEDRRVSVGSASLNKGPKSQHGLSFEKWLLIGTLLCGVLFLVIGLVLLGRMLVEALRRKRYSRLDYLINGIYVDI.

Positions 1-24 (MLFRGTSLAYSLLVISFLTPRSSA) are cleaved as a signal peptide. Over 25 to 369 (GQNCLTKSLE…HGLSFEKWLL (345 aa)) the chain is Extracellular. In terms of domain architecture, MANSC spans 32–116 (SLEDVVIDIQ…LKPAKGLVTY (85 aa)). N-linked (GlcNAc...) asparagine glycans are attached at residues asparagine 128, asparagine 234, and asparagine 335. Residues 311–339 (FQGGSTLTSDPRHGKSSTSESSITNKTAS) form a disordered region. Positions 326 to 338 (SSTSESSITNKTA) are enriched in polar residues. A helical transmembrane segment spans residues 370–392 (IGTLLCGVLFLVIGLVLLGRMLV). At 393–414 (EALRRKRYSRLDYLINGIYVDI) the chain is on the cytoplasmic side.

The protein localises to the membrane. This chain is MANSC domain-containing protein 1 (Mansc1), found in Mus musculus (Mouse).